Reading from the N-terminus, the 515-residue chain is Methionine--tRNA ligase (515 aa).

The 'HIGH' region motif lies at 13–23 (AYPNGKPHIGH). Positions 300 to 304 (KMSKS) match the 'KMSKS' region motif. An ATP-binding site is contributed by Lys-303.

It belongs to the class-I aminoacyl-tRNA synthetase family. MetG type 2B subfamily. Monomer.

It is found in the cytoplasm. It catalyses the reaction tRNA(Met) + L-methionine + ATP = L-methionyl-tRNA(Met) + AMP + diphosphate. Is required not only for elongation of protein synthesis but also for the initiation of all mRNA translation through initiator tRNA(fMet) aminoacylation. The polypeptide is Methionine--tRNA ligase (Brucella melitensis biotype 1 (strain ATCC 23456 / CCUG 17765 / NCTC 10094 / 16M)).